The sequence spans 70 residues: Putative membrane protein insertion efficiency factor (70 aa).

The protein belongs to the UPF0161 family.

It is found in the cell membrane. In terms of biological role, could be involved in insertion of integral membrane proteins into the membrane. The sequence is that of Putative membrane protein insertion efficiency factor from Moorella thermoacetica (strain ATCC 39073 / JCM 9320).